The sequence spans 500 residues: Probable cytosol aminopeptidase (500 aa).

Positions 267 and 272 each coordinate Mn(2+). The active site involves Lys279. Residues Asp290, Asp349, and Glu351 each contribute to the Mn(2+) site. Arg353 is a catalytic residue.

This sequence belongs to the peptidase M17 family. Mn(2+) is required as a cofactor.

The protein localises to the cytoplasm. It carries out the reaction Release of an N-terminal amino acid, Xaa-|-Yaa-, in which Xaa is preferably Leu, but may be other amino acids including Pro although not Arg or Lys, and Yaa may be Pro. Amino acid amides and methyl esters are also readily hydrolyzed, but rates on arylamides are exceedingly low.. It catalyses the reaction Release of an N-terminal amino acid, preferentially leucine, but not glutamic or aspartic acids.. Presumably involved in the processing and regular turnover of intracellular proteins. Catalyzes the removal of unsubstituted N-terminal amino acids from various peptides. This chain is Probable cytosol aminopeptidase, found in Tolumonas auensis (strain DSM 9187 / NBRC 110442 / TA 4).